The sequence spans 534 residues: Peptide chain release factor 3 (534 aa).

The tr-type G domain maps to 9-278; it reads ARRRTFAIIS…FFVEHAPPPQ (270 aa). GTP contacts are provided by residues 18–25, 86–90, and 140–143; these read SHPDAGKT, DTPGH, and NKLD.

Belongs to the TRAFAC class translation factor GTPase superfamily. Classic translation factor GTPase family. PrfC subfamily.

The protein localises to the cytoplasm. Its function is as follows. Increases the formation of ribosomal termination complexes and stimulates activities of RF-1 and RF-2. It binds guanine nucleotides and has strong preference for UGA stop codons. It may interact directly with the ribosome. The stimulation of RF-1 and RF-2 is significantly reduced by GTP and GDP, but not by GMP. In Xanthomonas campestris pv. campestris (strain 8004), this protein is Peptide chain release factor 3.